The chain runs to 267 residues: Thiazole synthase (267 aa).

Residue lysine 101 is the Schiff-base intermediate with DXP of the active site. Residues glycine 162, alanine 188–glycine 189, and asparagine 210–threonine 211 each bind 1-deoxy-D-xylulose 5-phosphate. Residues histidine 247–valine 267 form a disordered region.

It belongs to the ThiG family. As to quaternary structure, homotetramer. Forms heterodimers with either ThiH or ThiS.

It localises to the cytoplasm. The enzyme catalyses [ThiS sulfur-carrier protein]-C-terminal-Gly-aminoethanethioate + 2-iminoacetate + 1-deoxy-D-xylulose 5-phosphate = [ThiS sulfur-carrier protein]-C-terminal Gly-Gly + 2-[(2R,5Z)-2-carboxy-4-methylthiazol-5(2H)-ylidene]ethyl phosphate + 2 H2O + H(+). It participates in cofactor biosynthesis; thiamine diphosphate biosynthesis. Its function is as follows. Catalyzes the rearrangement of 1-deoxy-D-xylulose 5-phosphate (DXP) to produce the thiazole phosphate moiety of thiamine. Sulfur is provided by the thiocarboxylate moiety of the carrier protein ThiS. In vitro, sulfur can be provided by H(2)S. The sequence is that of Thiazole synthase from Deinococcus geothermalis (strain DSM 11300 / CIP 105573 / AG-3a).